We begin with the raw amino-acid sequence, 754 residues long: 5-methyltetrahydropteroyltriglutamate--homocysteine methyltransferase (754 aa).

Residues 19-22 and K121 contribute to the 5-methyltetrahydropteroyltri-L-glutamate site; that span reads RELK. Residues 423–425 and E476 contribute to the L-homocysteine site; that span reads IGS. Residues 423–425 and E476 each bind L-methionine; that span reads IGS. 5-methyltetrahydropteroyltri-L-glutamate is bound by residues 507-508 and W553; that span reads RC. D591 is an L-homocysteine binding site. D591 is an L-methionine binding site. E597 serves as a coordination point for 5-methyltetrahydropteroyltri-L-glutamate. Residues H633, C635, and E657 each coordinate Zn(2+). The active-site Proton donor is the H686. C718 contributes to the Zn(2+) binding site.

This sequence belongs to the vitamin-B12 independent methionine synthase family. Zn(2+) is required as a cofactor.

The catalysed reaction is 5-methyltetrahydropteroyltri-L-glutamate + L-homocysteine = tetrahydropteroyltri-L-glutamate + L-methionine. It participates in amino-acid biosynthesis; L-methionine biosynthesis via de novo pathway; L-methionine from L-homocysteine (MetE route): step 1/1. Functionally, catalyzes the transfer of a methyl group from 5-methyltetrahydrofolate to homocysteine resulting in methionine formation. This Corynebacterium efficiens (strain DSM 44549 / YS-314 / AJ 12310 / JCM 11189 / NBRC 100395) protein is 5-methyltetrahydropteroyltriglutamate--homocysteine methyltransferase.